The following is a 337-amino-acid chain: Formamidase (337 aa).

The CN hydrolase domain occupies 14-257 (VVIGLVQLQL…DEIITAEVRP (244 aa)). Residue Glu-60 is the Proton acceptor of the active site. Lys-129 (proton donor) is an active-site residue. Residue Cys-162 is the Nucleophile of the active site.

Belongs to the carbon-nitrogen hydrolase superfamily. Aliphatic amidase family.

It carries out the reaction formamide + H2O = formate + NH4(+). Its function is as follows. Is an aliphatic amidase with a restricted substrate specificity, as it only hydrolyzes formamide. The protein is Formamidase of Bradyrhizobium sp. (strain ORS 278).